Reading from the N-terminus, the 372-residue chain is 4-hydroxybenzoate polyprenyltransferase, mitochondrial (372 aa).

The transit peptide at 1 to 42 (MFIWQRKSILLGRSILGSGRVTVAGIIGSSRKRYTSSSSSSS) directs the protein to the mitochondrion. Helical transmembrane passes span 92 to 112 (PVGTWLLYLPCSWSILMGAMM), 114 to 134 (GATLSATAGMLGIFGVGALVM), 171 to 191 (ALVFLGAQTLVGMGVLSLLPA), 193 to 213 (CWWLGLASLPIVFTYPLFKRF), 229 to 249 (ALLGFPAMGVMSWPTMIPLYL), 298 to 318 (IALLAVAGLNSGLLWGPGFIG), and 352 to 372 (TGLYFTYALAVDYILRLFGFL).

Belongs to the UbiA prenyltransferase family. The cofactor is Mg(2+).

It localises to the mitochondrion inner membrane. It catalyses the reaction an all-trans-polyprenyl diphosphate + 4-hydroxybenzoate = a 4-hydroxy-3-(all-trans-polyprenyl)benzoate + diphosphate. Its pathway is cofactor biosynthesis; ubiquinone biosynthesis. Catalyzes the prenylation of para-hydroxybenzoate (PHB) with an all-trans polyprenyl group. Mediates the second step in the final reaction sequence of coenzyme Q (CoQ) biosynthesis, which is the condensation of the polyisoprenoid side chain with PHB, generating the first membrane-bound Q intermediate. The sequence is that of 4-hydroxybenzoate polyprenyltransferase, mitochondrial from Saccharomyces cerevisiae (strain ATCC 204508 / S288c) (Baker's yeast).